Consider the following 387-residue polypeptide: Succinate--CoA ligase [ADP-forming] subunit beta (387 aa).

An ATP-grasp domain is found at 9 to 245 (KDLLESYGLK…KSQENAKELK (237 aa)). Residues Lys-46, 53-55 (GRG), Glu-100, Tyr-103, and Glu-108 each bind ATP. The Mg(2+) site is built by Asn-200 and Asp-214. Substrate is bound by residues Asn-265 and 322–324 (GIV).

This sequence belongs to the succinate/malate CoA ligase beta subunit family. Heterotetramer of two alpha and two beta subunits. The cofactor is Mg(2+).

The catalysed reaction is succinate + ATP + CoA = succinyl-CoA + ADP + phosphate. It catalyses the reaction GTP + succinate + CoA = succinyl-CoA + GDP + phosphate. Its pathway is carbohydrate metabolism; tricarboxylic acid cycle; succinate from succinyl-CoA (ligase route): step 1/1. In terms of biological role, succinyl-CoA synthetase functions in the citric acid cycle (TCA), coupling the hydrolysis of succinyl-CoA to the synthesis of either ATP or GTP and thus represents the only step of substrate-level phosphorylation in the TCA. The beta subunit provides nucleotide specificity of the enzyme and binds the substrate succinate, while the binding sites for coenzyme A and phosphate are found in the alpha subunit. The sequence is that of Succinate--CoA ligase [ADP-forming] subunit beta from Francisella tularensis subsp. mediasiatica (strain FSC147).